A 243-amino-acid chain; its full sequence is Tyrosine recombinase XerD-like (243 aa).

In terms of domain architecture, Core-binding (CB) spans 1–72; the sequence is MKEYIRPFLN…AVNQFLYFLY (72 aa). Residues 85–243 form the Tyr recombinase domain; it reads LPKVSVSKEQ…KTMITLEKYR (159 aa). Residues lysine 149 and arginine 210 contribute to the active site. Tyrosine 242 acts as the O-(3'-phospho-DNA)-tyrosine intermediate in catalysis.

The protein belongs to the 'phage' integrase family. XerD-like subfamily.

Its subcellular location is the cytoplasm. Putative tyrosine recombinase. Not involved in the cutting and rejoining of the recombining DNA molecules on dif(SL) site. The protein is Tyrosine recombinase XerD-like of Streptococcus sanguinis (strain SK36).